The primary structure comprises 518 residues: Crotonobetaine/carnitine--CoA ligase (518 aa).

Belongs to the ATP-dependent AMP-binding enzyme family.

The enzyme catalyses 4-(trimethylamino)butanoate + ATP + CoA = 4-(trimethylamino)butanoyl-CoA + AMP + diphosphate. It carries out the reaction crotonobetaine + ATP + CoA = crotonobetainyl-CoA + AMP + diphosphate. The catalysed reaction is (R)-carnitine + ATP + CoA = (R)-carnitinyl-CoA + AMP + diphosphate. It participates in amine and polyamine metabolism; carnitine metabolism. In terms of biological role, catalyzes the transfer of CoA to carnitine, generating the initial carnitinyl-CoA needed for the CaiB reaction cycle. Also has activity toward crotonobetaine and gamma-butyrobetaine. This chain is Crotonobetaine/carnitine--CoA ligase, found in Proteus sp. (strain LE138).